The primary structure comprises 212 residues: MNNPMIKNGLLLALFALLCTGLVAVVNQQTFDKIKLQQQKELMGILHQLIPEEIHDNELTAQCTLLQNKEALGTEDAMPAYIATAAGKPVAIAMEAIAPDGYNGNIKLIVGINTQGEVLGVRTLAHQETPGLGDKIELRKSDWVTKFVGKVLKSEDDKQWQVQKDGGDFDQFTGATITPRAYVKAVKRAVWYFTQHQAEIFSQPLNCEAKHD.

A helical membrane pass occupies residues 9 to 29 (GLLLALFALLCTGLVAVVNQQ). Threonine 176 carries the post-translational modification FMN phosphoryl threonine.

This sequence belongs to the RnfG family. As to quaternary structure, the complex is composed of six subunits: RnfA, RnfB, RnfC, RnfD, RnfE and RnfG. The cofactor is FMN.

It is found in the cell inner membrane. Part of a membrane-bound complex that couples electron transfer with translocation of ions across the membrane. The polypeptide is Ion-translocating oxidoreductase complex subunit G (Shewanella oneidensis (strain ATCC 700550 / JCM 31522 / CIP 106686 / LMG 19005 / NCIMB 14063 / MR-1)).